A 242-amino-acid polypeptide reads, in one-letter code: Small ribosomal subunit protein uS2 (242 aa).

Belongs to the universal ribosomal protein uS2 family.

This chain is Small ribosomal subunit protein uS2, found in Mannheimia succiniciproducens (strain KCTC 0769BP / MBEL55E).